The chain runs to 561 residues: Asparagine synthetase [glutamine-hydrolyzing] (561 aa).

Residue Cys-2 is the For GATase activity of the active site. In terms of domain architecture, Glutamine amidotransferase type-2 spans 2 to 191 (CGIWALFGSD…PGHYEVLDLK (190 aa)). Residues 49 to 53 (RLAVV), 75 to 77 (NGE), and Asp-97 contribute to the L-glutamine site. The Asparagine synthetase domain maps to 213-536 (HAIYDSVEKL…PGRADWLTHY (324 aa)). Residues Leu-256, Ile-288, and 363 to 364 (SG) each bind ATP. At Lys-385 the chain carries N6-acetyllysine. Thr-545 is subject to Phosphothreonine. Ser-557 carries the phosphoserine modification.

It carries out the reaction L-aspartate + L-glutamine + ATP + H2O = L-asparagine + L-glutamate + AMP + diphosphate + H(+). It functions in the pathway amino-acid biosynthesis; L-asparagine biosynthesis; L-asparagine from L-aspartate (L-Gln route): step 1/1. This Mus musculus (Mouse) protein is Asparagine synthetase [glutamine-hydrolyzing] (Asns).